The chain runs to 319 residues: Ribose-phosphate pyrophosphokinase (319 aa).

ATP is bound by residues 40–42 (DGE) and 99–100 (RQ). Residues His-134 and Asp-174 each coordinate Mg(2+). The active site involves Lys-198. Residues Arg-200, Asp-224, and 228 to 232 (DTAGT) contribute to the D-ribose 5-phosphate site.

Belongs to the ribose-phosphate pyrophosphokinase family. Class I subfamily. Homohexamer. The cofactor is Mg(2+).

It localises to the cytoplasm. It carries out the reaction D-ribose 5-phosphate + ATP = 5-phospho-alpha-D-ribose 1-diphosphate + AMP + H(+). It functions in the pathway metabolic intermediate biosynthesis; 5-phospho-alpha-D-ribose 1-diphosphate biosynthesis; 5-phospho-alpha-D-ribose 1-diphosphate from D-ribose 5-phosphate (route I): step 1/1. Functionally, involved in the biosynthesis of the central metabolite phospho-alpha-D-ribosyl-1-pyrophosphate (PRPP) via the transfer of pyrophosphoryl group from ATP to 1-hydroxyl of ribose-5-phosphate (Rib-5-P). In Xanthomonas campestris pv. campestris (strain ATCC 33913 / DSM 3586 / NCPPB 528 / LMG 568 / P 25), this protein is Ribose-phosphate pyrophosphokinase.